Reading from the N-terminus, the 245-residue chain is Membrane-associated progesterone-binding protein 4 (245 aa).

The chain crosses the membrane as a helical span at residues Arg6–Phe26. The Cytochrome b5 heme-binding domain maps to Lys39–Val138. The segment at Glu45–Val138 is steroid-binding.

This sequence belongs to the cytochrome b5 family. MAPR subfamily.

Its subcellular location is the membrane. The polypeptide is Membrane-associated progesterone-binding protein 4 (Arabidopsis thaliana (Mouse-ear cress)).